A 144-amino-acid chain; its full sequence is Large ribosomal subunit protein uL15 (144 aa).

Positions 1-54 (MRLNTIKPGEGSKKTAKRVGRGIGSGLGKTCGRGHKGQKSRSGGFHKVGFEGGQ) are disordered. Residues 21–31 (RGIGSGLGKTC) are compositionally biased toward gly residues.

The protein belongs to the universal ribosomal protein uL15 family. As to quaternary structure, part of the 50S ribosomal subunit.

Binds to the 23S rRNA. This chain is Large ribosomal subunit protein uL15, found in Dechloromonas aromatica (strain RCB).